The following is a 357-amino-acid chain: Glycerol-3-phosphate dehydrogenase [NAD(P)+] (357 aa).

Residues Ser-30, Phe-31, Arg-51, and Lys-124 each contribute to the NADPH site. Sn-glycerol 3-phosphate is bound by residues Lys-124 and Gly-152. Ala-156 is an NADPH binding site. Sn-glycerol 3-phosphate is bound by residues Lys-207, Asp-260, Ser-270, Arg-271, and Asn-272. The active-site Proton acceptor is Lys-207. Residue Arg-271 coordinates NADPH. Glu-297 lines the NADPH pocket.

It belongs to the NAD-dependent glycerol-3-phosphate dehydrogenase family.

It is found in the cytoplasm. It catalyses the reaction sn-glycerol 3-phosphate + NAD(+) = dihydroxyacetone phosphate + NADH + H(+). The enzyme catalyses sn-glycerol 3-phosphate + NADP(+) = dihydroxyacetone phosphate + NADPH + H(+). Its pathway is membrane lipid metabolism; glycerophospholipid metabolism. Its function is as follows. Catalyzes the reduction of the glycolytic intermediate dihydroxyacetone phosphate (DHAP) to sn-glycerol 3-phosphate (G3P), the key precursor for phospholipid synthesis. This Acinetobacter baumannii (strain SDF) protein is Glycerol-3-phosphate dehydrogenase [NAD(P)+].